A 280-amino-acid chain; its full sequence is ESX-1 secretion-associated protein EspJ (280 aa).

Phosphoserine is present on Ser70. 2 stretches are compositionally biased toward low complexity: residues 167–181 (QTISQTAQQAAQSAQ) and 246–280 (PAQAMDTGAGARPAASPLAAPVDPSTPAPSTTTTL). Residues 167–280 (QTISQTAQQA…TPAPSTTTTL (114 aa)) form a disordered region.

In terms of assembly, residues 76-280 interact with EsxB and an artificial EsxB-EsxA heterodimer. Post-translationally, phosphorylated at Ser-70.

It is found in the secreted. In terms of biological role, could be involved in regulation of growth and intracellular survival. This is ESX-1 secretion-associated protein EspJ from Mycobacterium tuberculosis (strain ATCC 25618 / H37Rv).